Consider the following 483-residue polypeptide: Centrosomal protein cep57l1 (483 aa).

Residues 94 to 228 (EHKKVLESEK…AQVQTSLEVN (135 aa)) are a coiled coil. Disordered stretches follow at residues 237–261 (AQNSTQRKVKKKKQSKLKNSVSKEP), 303–325 (PQVSQKNPKTAEHKPSVLPGGSR), and 416–460 (KEQP…SKAS). Basic residues predominate over residues 243–252 (RKVKKKKQSK). Residues 375–418 (EDLERELDYVVKQMEIKSDQIMKLKRHQLNVNKLKKTAKLLKEQ) adopt a coiled-coil conformation. Residues 420 to 435 (RPTSVTKLAADKQNTG) show a composition bias toward polar residues.

The protein belongs to the translokin family. Interacts with clip1, mis12, ndc80 and zwint. Interacts with gamma-tubulin.

The protein localises to the cytoplasm. Its subcellular location is the cytoskeleton. The protein resides in the microtubule organizing center. It is found in the centrosome. It localises to the chromosome. The protein localises to the centromere. Its subcellular location is the kinetochore. The protein resides in the spindle. Its function is as follows. Required for spindle microtubule attachment to both kinetochores and centrosomes. Also functions to tether minus-ends of spindle microtubules to centrosomes. May act by forming ring-like structures around microtubules, or by serving as a cross-linker or scaffold at the attachment site. This is Centrosomal protein cep57l1 (cep57l1) from Xenopus tropicalis (Western clawed frog).